We begin with the raw amino-acid sequence, 198 residues long: Transcriptional regulator GfcR (198 aa).

It belongs to the purine/pyrimidine phosphoribosyltransferase family. GfcR subfamily.

In Thermoplasma acidophilum (strain ATCC 25905 / DSM 1728 / JCM 9062 / NBRC 15155 / AMRC-C165), this protein is Transcriptional regulator GfcR.